Reading from the N-terminus, the 913-residue chain is MQEDTIIQKNLFAIGNDINEQKKITKIPENLSLEDLKKESQKRPRQRKNSTNLINKFKTDLISNNKNVCINEESYSYKTVSKLKLTPVMKHYVTLKEENKDRLLLYRLGDFFECFFEDAVLISNLLEITLTSKDAGKEIGKIPMAGVPHHAMERYCADLIKKNYSVVICDQLEKSSGNYGTPIKRGITRIITPGTVIEEGMLIAKKNNWISAIYLSEENSDESYEWGISKADVSTGELITLEGQSLSKLFDEIIKLDSSEIIVGSNTARDLLIKGNSQITYTVSQETNFGINEANYLIKNYFQIANLEGIGLKNLNNATRSLGGLLNYLEKINPSNLDKDSSLKISLDFPQIQYGHNKLIIDYQTQKNLEIKNTQRENNYVGSLLWSIDRTYTCMGARCLRRWIDSPLLNVNEIYKRQNIITNFLESKKLRIDTQNLLRAMGDLERLAGRACAGHASPRDLIAIAEGLKKLPRLKSIIELFKYDLPDWTDQLKNIDEGLLELADTISFKLVENPPLNISEGGMIHDGVDNILDGLRNLMDDYSEWLNKEESKERKISKISNLKIQFHKNFGYYISINKSKVNLAPQHWIKRQTLTNEERYITSEIKNKENKIFQIKSRASSKEYEIFCELRNIVAEKTKQIRSIAKSIASLDALLGLSITSVENNFIKPSLIPINDSMTKNSTKIIAGRNPIVEQLLSDKKFVANDISFEDNQKLIILTGPNASGKSCFIRQLGLIQILTQIGSFVPANNAEIKIADRIFTRIGAVDDQSSGQSTFMVEMSETASILNQATSSSLVLLDEIGRGTSTFDGLSIAWSVSEYLAKKIQCNTIFATHYHELNYLKNTNKNIQNFQVLVEQNNDQLIFSHRIVKGGSNKSYGIEAAKLAGVPKEVIEKAKSVLNSLEENNKLNYDIK.

720–727 is a binding site for ATP; the sequence is GPNASGKS.

The protein belongs to the DNA mismatch repair MutS family.

In terms of biological role, this protein is involved in the repair of mismatches in DNA. It is possible that it carries out the mismatch recognition step. This protein has a weak ATPase activity. In Prochlorococcus marinus (strain AS9601), this protein is DNA mismatch repair protein MutS.